Here is a 274-residue protein sequence, read N- to C-terminus: Isoprenyl transferase (274 aa).

The active site involves aspartate 49. Aspartate 49 lines the Mg(2+) pocket. Substrate contacts are provided by residues 50–53 (GNRR), phenylalanine 54, arginine 62, histidine 66, and 94–96 (STD). The active-site Proton acceptor is the asparagine 97. Substrate contacts are provided by residues arginine 100, arginine 223, and 229-231 (RLS). Residue glutamate 242 participates in Mg(2+) binding.

The protein belongs to the UPP synthase family. As to quaternary structure, homodimer. Mg(2+) is required as a cofactor.

Catalyzes the condensation of isopentenyl diphosphate (IPP) with allylic pyrophosphates generating different type of terpenoids. The protein is Isoprenyl transferase of Deinococcus radiodurans (strain ATCC 13939 / DSM 20539 / JCM 16871 / CCUG 27074 / LMG 4051 / NBRC 15346 / NCIMB 9279 / VKM B-1422 / R1).